Reading from the N-terminus, the 101-residue chain is NAD(P)H-quinone oxidoreductase subunit 4L, chloroplastic (101 aa).

Helical transmembrane passes span 2–22, 32–52, and 61–81; these read MLEH…YGLI, MCLE…SDFF, and IFSI…LAIV.

This sequence belongs to the complex I subunit 4L family. NDH is composed of at least 16 different subunits, 5 of which are encoded in the nucleus.

It localises to the plastid. It is found in the chloroplast thylakoid membrane. It catalyses the reaction a plastoquinone + NADH + (n+1) H(+)(in) = a plastoquinol + NAD(+) + n H(+)(out). The catalysed reaction is a plastoquinone + NADPH + (n+1) H(+)(in) = a plastoquinol + NADP(+) + n H(+)(out). In terms of biological role, NDH shuttles electrons from NAD(P)H:plastoquinone, via FMN and iron-sulfur (Fe-S) centers, to quinones in the photosynthetic chain and possibly in a chloroplast respiratory chain. The immediate electron acceptor for the enzyme in this species is believed to be plastoquinone. Couples the redox reaction to proton translocation, and thus conserves the redox energy in a proton gradient. In Helianthus annuus (Common sunflower), this protein is NAD(P)H-quinone oxidoreductase subunit 4L, chloroplastic.